The following is a 305-amino-acid chain: Thymidylate synthase (305 aa).

Residues arginine 26 and 160–161 (RR) contribute to the dUMP site. Cysteine 180 serves as the catalytic Nucleophile. Residues 207–210 (RSCD), asparagine 218, and 248–250 (HLY) each bind dUMP. Aspartate 210 lines the (6R)-5,10-methylene-5,6,7,8-tetrahydrofolate pocket. Alanine 304 contacts (6R)-5,10-methylene-5,6,7,8-tetrahydrofolate.

It belongs to the thymidylate synthase family. Bacterial-type ThyA subfamily. Homodimer.

Its subcellular location is the cytoplasm. The enzyme catalyses dUMP + (6R)-5,10-methylene-5,6,7,8-tetrahydrofolate = 7,8-dihydrofolate + dTMP. The protein operates within pyrimidine metabolism; dTTP biosynthesis. Catalyzes the reductive methylation of 2'-deoxyuridine-5'-monophosphate (dUMP) to 2'-deoxythymidine-5'-monophosphate (dTMP) while utilizing 5,10-methylenetetrahydrofolate (mTHF) as the methyl donor and reductant in the reaction, yielding dihydrofolate (DHF) as a by-product. This enzymatic reaction provides an intracellular de novo source of dTMP, an essential precursor for DNA biosynthesis. The protein is Thymidylate synthase of Sinorhizobium fredii (strain NBRC 101917 / NGR234).